A 1015-amino-acid polypeptide reads, in one-letter code: DNA polymerase catalytic subunit (1015 aa).

It belongs to the DNA polymerase type-B family. As to quaternary structure, forms a complex with the major DNA-binding protein BALF2, the DNA polymerase processivity factor BMRF1, and the alkaline exonuclease BGLF5. Interacts with the putative helicase-primase complex composed of BBLF4, BSLF1 and BBLF2/3 proteins; these interactions may coordinate leading and lagging strand DNA synthesis at the replication fork.

It localises to the host nucleus. It carries out the reaction DNA(n) + a 2'-deoxyribonucleoside 5'-triphosphate = DNA(n+1) + diphosphate. Replicates viral genomic DNA in the late phase of lytic infection, producing long concatemeric DNA. The replication complex is composed of six viral proteins: the DNA polymerase, processivity factor, primase, primase-associated factor, helicase, and ssDNA-binding protein. This chain is DNA polymerase catalytic subunit, found in Homo sapiens (Human).